Here is a 154-residue protein sequence, read N- to C-terminus: Ribonuclease H (154 aa).

An RNase H type-1 domain is found at 1-142 (MRKQVEIFTD…CDELARAAAS (142 aa)). The Mg(2+) site is built by Asp-10, Glu-48, Asp-70, and Asp-134.

It belongs to the RNase H family. Monomer. Mg(2+) is required as a cofactor.

The protein resides in the cytoplasm. The enzyme catalyses Endonucleolytic cleavage to 5'-phosphomonoester.. In terms of biological role, endonuclease that specifically degrades the RNA of RNA-DNA hybrids. The sequence is that of Ribonuclease H from Pectobacterium atrosepticum (strain SCRI 1043 / ATCC BAA-672) (Erwinia carotovora subsp. atroseptica).